Consider the following 47-residue polypeptide: Light-harvesting protein B800/850/890 alpha-2 chain (47 aa).

The Cytoplasmic portion of the chain corresponds to 1–12 (MWRMWKILDYRR). Residues 13–33 (TVVLAHVGMAVLALLIHFILL) form a helical membrane-spanning segment. His-29 serves as a coordination point for a bacteriochlorophyll. Residues 34-47 (STESFNWLEGNPYG) lie on the Periplasmic side of the membrane.

The protein belongs to the antenna complex alpha subunit family. The core complex is formed by different alpha and beta chains, binding bacteriochlorophyll molecules, and arranged most probably in tetrameric structures disposed around the reaction center. The non-pigmented gamma chains may constitute additional components.

Its subcellular location is the cell inner membrane. Antenna complexes are light-harvesting systems, which transfer the excitation energy to the reaction centers. This chain is Light-harvesting protein B800/850/890 alpha-2 chain, found in Halorhodospira halophila (strain DSM 244 / SL1) (Ectothiorhodospira halophila (strain DSM 244 / SL1)).